The sequence spans 558 residues: 5-aminolevulinate synthase, mitochondrial (558 aa).

Residues 1 to 25 constitute a mitochondrion transit peptide; sequence MERVVKLAAKHCPFVSKADPSALRR. The segment at 103-124 is disordered; sequence TTTPVTKKHQMPKHYASDLNGV. Residues arginine 152, serine 265, and lysine 284 each contribute to the substrate site. The pyridoxal 5'-phosphate site is built by serine 317, histidine 345, and threonine 374. The active site involves lysine 377. Lysine 377 carries the N6-(pyridoxal phosphate)lysine modification. The pyridoxal 5'-phosphate site is built by threonine 406 and threonine 407. Threonine 492 provides a ligand contact to substrate.

It belongs to the class-II pyridoxal-phosphate-dependent aminotransferase family. As to quaternary structure, homodimer. It depends on pyridoxal 5'-phosphate as a cofactor.

The protein localises to the mitochondrion matrix. The catalysed reaction is succinyl-CoA + glycine + H(+) = 5-aminolevulinate + CO2 + CoA. The protein operates within porphyrin-containing compound metabolism; protoporphyrin-IX biosynthesis; 5-aminolevulinate from glycine: step 1/1. Functionally, catalyzes the synthesis of 5-aminolevulinate (ALA) from succinyl-CoA and glycine, the first and rate-limiting step in heme biosynthesis. This is 5-aminolevulinate synthase, mitochondrial from Schizosaccharomyces pombe (strain 972 / ATCC 24843) (Fission yeast).